A 677-amino-acid polypeptide reads, in one-letter code: Membrane-associated tyrosine- and threonine-specific cdc2-inhibitory kinase wee-1.3 (677 aa).

The span at 1–22 shows a compositional bias: polar residues; it reads MDDTEGNSSMDSIRNGQSSPLP. Residues 1–30 form a disordered region; sequence MDDTEGNSSMDSIRNGQSSPLPQVTPRLPQ. A Protein kinase domain is found at 108 to 355; sequence FQIDEIIGRG…SRDLLDHPVI (248 aa). ATP is bound by residues 114-122 and K137; that span reads IGRGSFGEV. Residue D228 is the Proton acceptor of the active site. Mg(2+)-binding residues include N233 and D246. Disordered stretches follow at residues 478–526 and 632–677; these read FDND…GTPR and EPSN…GDEV. Residues 489–499 show a composition bias toward polar residues; the sequence is ATCSSSNSSAI. Residues 638–652 are compositionally biased toward basic and acidic residues; sequence TVDHHTILEQSESPR.

This sequence belongs to the protein kinase superfamily. Ser/Thr protein kinase family. WEE1 subfamily.

The protein resides in the golgi apparatus membrane. The protein localises to the cytoplasm. The enzyme catalyses L-seryl-[protein] + ATP = O-phospho-L-seryl-[protein] + ADP + H(+). The catalysed reaction is L-threonyl-[protein] + ATP = O-phospho-L-threonyl-[protein] + ADP + H(+). Functionally, acts as a negative regulator of entry into mitosis (G2 to M transition) by phosphorylation of the CDK1 kinase during oocyte maturation. Required for oocyte maturation, embryonic development, germline proliferation and initiation of meiosis during spermatogenesis. Required for chromosome structure during mitosis and negative regulation of nuclear envelope breakdown. The sequence is that of Membrane-associated tyrosine- and threonine-specific cdc2-inhibitory kinase wee-1.3 (wee-1.3) from Caenorhabditis elegans.